A 131-amino-acid chain; its full sequence is Large ribosomal subunit protein uL22 (131 aa).

Belongs to the universal ribosomal protein uL22 family. As to quaternary structure, part of the 50S ribosomal subunit.

Functionally, this protein binds specifically to 23S rRNA; its binding is stimulated by other ribosomal proteins, e.g. L4, L17, and L20. It is important during the early stages of 50S assembly. It makes multiple contacts with different domains of the 23S rRNA in the assembled 50S subunit and ribosome. In terms of biological role, the globular domain of the protein is located near the polypeptide exit tunnel on the outside of the subunit, while an extended beta-hairpin is found that lines the wall of the exit tunnel in the center of the 70S ribosome. The protein is Large ribosomal subunit protein uL22 of Phytoplasma mali (strain AT).